An 89-amino-acid chain; its full sequence is Small ribosomal subunit protein bS20 (89 aa).

The tract at residues 1–20 (MANHKSAEKRARQTIKRTER) is disordered.

The protein belongs to the bacterial ribosomal protein bS20 family.

Binds directly to 16S ribosomal RNA. In Campylobacter concisus (strain 13826), this protein is Small ribosomal subunit protein bS20.